The sequence spans 438 residues: 3-phosphoshikimate 1-carboxyvinyltransferase (438 aa).

3-phosphoshikimate is bound by residues Lys25, Ser26, and Arg30. Lys25 provides a ligand contact to phosphoenolpyruvate. The phosphoenolpyruvate site is built by Gly99 and Arg128. Residues Ser173, Gln175, Asp325, and Lys352 each contribute to the 3-phosphoshikimate site. Gln175 lines the phosphoenolpyruvate pocket. Asp325 (proton acceptor) is an active-site residue. Phosphoenolpyruvate is bound by residues Arg356 and Arg398.

It belongs to the EPSP synthase family. Monomer.

It is found in the cytoplasm. The catalysed reaction is 3-phosphoshikimate + phosphoenolpyruvate = 5-O-(1-carboxyvinyl)-3-phosphoshikimate + phosphate. It functions in the pathway metabolic intermediate biosynthesis; chorismate biosynthesis; chorismate from D-erythrose 4-phosphate and phosphoenolpyruvate: step 6/7. Its function is as follows. Catalyzes the transfer of the enolpyruvyl moiety of phosphoenolpyruvate (PEP) to the 5-hydroxyl of shikimate-3-phosphate (S3P) to produce enolpyruvyl shikimate-3-phosphate and inorganic phosphate. The sequence is that of 3-phosphoshikimate 1-carboxyvinyltransferase from Prochlorococcus marinus (strain MIT 9515).